Reading from the N-terminus, the 527-residue chain is Peptide chain release factor 3 (527 aa).

In terms of domain architecture, tr-type G spans 9 to 277; that stretch reads AKRRTFAIIS…AVVNWAPKPL (269 aa). GTP is bound by residues 18-25, 86-90, and 140-143; these read SHPDAGKT, DTPGH, and NKLD.

The protein belongs to the TRAFAC class translation factor GTPase superfamily. Classic translation factor GTPase family. PrfC subfamily.

The protein resides in the cytoplasm. Increases the formation of ribosomal termination complexes and stimulates activities of RF-1 and RF-2. It binds guanine nucleotides and has strong preference for UGA stop codons. It may interact directly with the ribosome. The stimulation of RF-1 and RF-2 is significantly reduced by GTP and GDP, but not by GMP. In Pseudomonas syringae pv. syringae (strain B728a), this protein is Peptide chain release factor 3.